The chain runs to 540 residues: ATP-dependent RNA helicase DBP3 (540 aa).

Residues 1–35 (MTVEESKKRKLTDDVAIKQNEKKIKKDKKVKDKKD) are compositionally biased toward basic and acidic residues. The tract at residues 1 to 89 (MTVEESKKRK…TTEQPSKQVK (89 aa)) is disordered. The span at 36–52 (KKDKKDKKDKKEKKEKK) shows a compositional bias: basic residues. 2 stretches are compositionally biased toward basic and acidic residues: residues 53 to 62 (EKKEKNDKKD) and 68 to 79 (DKKAEQVDKLSE). Positions 130-156 (LAFNQISLDKEVQNEIAKFPKPTPIQA) match the Q motif motif. Residues 159-332 (WPYLLSGKDV…STFMKEPVKV (174 aa)) enclose the Helicase ATP-binding domain. Residue 172 to 179 (AETGSGKT) participates in ATP binding. A DEAD box motif is present at residues 279–282 (DEAD). The Helicase C-terminal domain occupies 361–510 (KLLDLLKKYQ…PVPEDLIKFG (150 aa)).

Belongs to the DEAD box helicase family. DDX5/DBP2 subfamily.

The protein resides in the nucleus. Its subcellular location is the nucleolus. The enzyme catalyses ATP + H2O = ADP + phosphate + H(+). ATP-dependent RNA helicase required for 60S ribosomal subunit synthesis. Involved in efficient pre-rRNA processing, predominantly at site A3, which is necessary for the normal formation of 25S and 5.8S rRNAs. The polypeptide is ATP-dependent RNA helicase DBP3 (DBP3) (Candida glabrata (strain ATCC 2001 / BCRC 20586 / JCM 3761 / NBRC 0622 / NRRL Y-65 / CBS 138) (Yeast)).